The sequence spans 172 residues: Diphosphoinositol polyphosphate phosphohydrolase 1 (172 aa).

Met-1 carries the N-acetylmethionine modification. Residues Arg-10, Lys-18–Arg-20, and Ser-39–Arg-41 contribute to the substrate site. One can recognise a Nudix hydrolase domain in the interval Tyr-17–Arg-144. Mg(2+)-binding residues include Gly-50 and Glu-66. A Nudix box motif is present at residues Gly-51–Gly-72. Catalysis depends on Glu-69, which acts as the Proton acceptor. Glu-70 contributes to the Mg(2+) binding site. Substrate is bound by residues Arg-89–His-91, Arg-115, and Lys-133.

Belongs to the Nudix hydrolase family. DIPP subfamily. In terms of assembly, monomer. Mg(2+) serves as cofactor. Mn(2+) is required as a cofactor. The cofactor is Zn(2+).

The protein resides in the cytoplasm. It is found in the nucleus. It carries out the reaction diphospho-myo-inositol polyphosphate + H2O = myo-inositol polyphosphate + phosphate.. It catalyses the reaction 5-diphospho-1D-myo-inositol 1,2,3,4,6-pentakisphosphate + H2O = 1D-myo-inositol hexakisphosphate + phosphate + H(+). The enzyme catalyses 3,5-bis(diphospho)-1D-myo-inositol 1,2,4,6-tetrakisphosphate + H2O = 3-diphospho-1D-myo-inositol 1,2,4,5,6-pentakisphosphate + phosphate + 2 H(+). The catalysed reaction is [phosphate](n+1) + n H2O = (n+1) phosphate + n H(+). It carries out the reaction P(1),P(5)-bis(5'-adenosyl) pentaphosphate + H2O = ADP + ATP + 2 H(+). It catalyses the reaction P(1),P(6)-bis(5'-adenosyl) hexaphosphate + H2O = 2 ATP + 2 H(+). The enzyme catalyses P(1),P(4)-bis(5'-adenosyl) tetraphosphate + H2O = AMP + ATP + 2 H(+). The catalysed reaction is a 5'-end (N(7)-methyl 5'-triphosphoguanosine)-ribonucleoside in mRNA + H2O = N(7)-methyl-GMP + a 5'-end diphospho-ribonucleoside in mRNA + 2 H(+). It carries out the reaction a 5'-end (N(7)-methyl 5'-triphosphoguanosine)-ribonucleoside in mRNA + H2O = N(7)-methyl-GDP + a 5'-end phospho-ribonucleoside in mRNA + 2 H(+). Its function is as follows. Cleaves a beta-phosphate from the diphosphate groups in PP-InsP5 (diphosphoinositol pentakisphosphate) and [PP]2-InsP4 (bisdiphosphoinositol tetrakisphosphate), suggesting that it may play a role in signal transduction. InsP6 (inositol hexakisphosphate) is not a substrate. Also able to catalyze the hydrolysis of dinucleoside oligophosphates, with diadenosine 5',5'''-P1,P6-hexaphosphate (Ap6A) and diadenosine 5',5'''- P1,P5-pentaphosphate (Ap5A) being the preferred substrates. The major reaction products are ADP and p4a from Ap6A and ADP and ATP from Ap5A. Also able to hydrolyze 5- phosphoribose 1-diphosphate. Acts as a decapping enzyme that can hydrolyze both monomethylated and unmethylated capped RNAs. Hydrolyzes monomethylated capped RNA after both the alpha- and beta-phosphates generating m7GMP + ppRNA and m7GDP + pRNA. Modulates the stability of a subset of mRNAs implicated in cell motility. Divalent cations zinc, magnesium and manganese determine its substrate specificity. Exhibits diphosphoinositol polyphosphate phosphohydrolase in the presence of magnesium ions, diadenosine hexaphosphate hydrolase activity in the presence of manganese ions and endopolyphosphatase activity in the presence of zinc ions. Plays an important role in limiting DNA damage and maintaining cell survival upon oxidative stress via its endopolyphosphatase activity. This is Diphosphoinositol polyphosphate phosphohydrolase 1 from Bos taurus (Bovine).